A 327-amino-acid chain; its full sequence is Dolichyl-phosphate beta-glucosyltransferase ALG5D (327 aa).

The Lumenal portion of the chain corresponds to 1 to 6 (MEKQLA). The chain crosses the membrane as a helical span at residues 7–27 (ELSVYILIIFLILGFIMAILM). The Cytoplasmic segment spans residues 28–327 (RFGDDTTLFD…NIWTIRDRKF (300 aa)).

It belongs to the glycosyltransferase 2 family.

It localises to the endoplasmic reticulum membrane. The catalysed reaction is a di-trans,poly-cis-dolichyl phosphate + UDP-alpha-D-glucose = a di-trans,poly-cis-dolichyl beta-D-glucosyl phosphate + UDP. Its pathway is protein modification; protein glycosylation. Dolichyl-phosphate beta-glucosyltransferase involved in the glycosylation of glycoproteins through the synthesis of dolichyl beta-D-glucosyl phosphate which serves as a sugar donor for transfer of three glucose residues to the Man-9-GlcNAc-2-PP-dolichol precursor to N-glycans. This is Dolichyl-phosphate beta-glucosyltransferase ALG5D from Trichomonas vaginalis (strain ATCC PRA-98 / G3).